Consider the following 500-residue polypeptide: Lysine--tRNA ligase (500 aa).

2 residues coordinate Mg(2+): E410 and E417.

The protein belongs to the class-II aminoacyl-tRNA synthetase family. Homodimer. It depends on Mg(2+) as a cofactor.

It localises to the cytoplasm. It catalyses the reaction tRNA(Lys) + L-lysine + ATP = L-lysyl-tRNA(Lys) + AMP + diphosphate. The sequence is that of Lysine--tRNA ligase from Shewanella oneidensis (strain ATCC 700550 / JCM 31522 / CIP 106686 / LMG 19005 / NCIMB 14063 / MR-1).